We begin with the raw amino-acid sequence, 488 residues long: 3-octaprenyl-4-hydroxybenzoate carboxy-lyase (488 aa).

Asparagine 172 is a Mn(2+) binding site. Residues 175-177, 189-191, and 194-195 each bind prenylated FMN; these read IYR, RWL, and RG. A Mn(2+)-binding site is contributed by glutamate 238. Aspartate 287 serves as the catalytic Proton donor.

It belongs to the UbiD family. Homohexamer. It depends on prenylated FMN as a cofactor. The cofactor is Mn(2+).

Its subcellular location is the cell membrane. The enzyme catalyses a 4-hydroxy-3-(all-trans-polyprenyl)benzoate + H(+) = a 2-(all-trans-polyprenyl)phenol + CO2. The protein operates within cofactor biosynthesis; ubiquinone biosynthesis. Functionally, catalyzes the decarboxylation of 3-octaprenyl-4-hydroxy benzoate to 2-octaprenylphenol, an intermediate step in ubiquinone biosynthesis. The protein is 3-octaprenyl-4-hydroxybenzoate carboxy-lyase of Pseudomonas fluorescens (strain SBW25).